The primary structure comprises 64 residues: Large ribosomal subunit protein bL35 (64 aa).

It belongs to the bacterial ribosomal protein bL35 family.

The sequence is that of Large ribosomal subunit protein bL35 from Coxiella burnetii (strain RSA 493 / Nine Mile phase I).